The chain runs to 72 residues: Disintegrin cereberin (72 aa).

Residues 1–72 enclose the Disintegrin domain; the sequence is EAGEECDCGS…SADCPRNRFH (72 aa). Intrachain disulfides connect C6/C21, C8/C16, C15/C38, C29/C35, C34/C59, and C47/C66. The Cell attachment site motif lies at 51 to 53; sequence RGD. Residues 51–72 are disordered; sequence RGDNPDDRCTGQSADCPRNRFH.

The protein belongs to the venom metalloproteinase (M12B) family. P-II subfamily. P-IIa sub-subfamily. Monomer (disintegrin). As to expression, expressed by the venom gland.

The protein resides in the secreted. Functionally, inhibits fibrinogen interaction with platelet. Acts by binding to alpha-IIb/beta-3 (ITGA2B/ITGB3) on the platelet surface and inhibits aggregation induced by ADP, thrombin, platelet-activating factor and collagen. The protein is Disintegrin cereberin of Crotalus cerberus (Arizona black rattlesnake).